The following is a 168-amino-acid chain: G/U mismatch-specific DNA glycosylase (168 aa).

Belongs to the uracil-DNA glycosylase (UDG) superfamily. TDG/mug family. As to quaternary structure, binds DNA as a monomer.

It localises to the cytoplasm. It catalyses the reaction Specifically hydrolyzes mismatched double-stranded DNA and polynucleotides, releasing free uracil.. Excises ethenocytosine and uracil, which can arise by alkylation or deamination of cytosine, respectively, from the corresponding mispairs with guanine in ds-DNA. It is capable of hydrolyzing the carbon-nitrogen bond between the sugar-phosphate backbone of the DNA and the mispaired base. The complementary strand guanine functions in substrate recognition. Required for DNA damage lesion repair in stationary-phase cells. The protein is G/U mismatch-specific DNA glycosylase of Escherichia coli O157:H7 (strain EC4115 / EHEC).